The primary structure comprises 163 residues: 3-isopropylmalate dehydratase small subunit (163 aa).

The protein belongs to the LeuD family. LeuD type 2 subfamily. As to quaternary structure, heterodimer of LeuC and LeuD.

The catalysed reaction is (2R,3S)-3-isopropylmalate = (2S)-2-isopropylmalate. It participates in amino-acid biosynthesis; L-leucine biosynthesis; L-leucine from 3-methyl-2-oxobutanoate: step 2/4. Catalyzes the isomerization between 2-isopropylmalate and 3-isopropylmalate, via the formation of 2-isopropylmaleate. The sequence is that of 3-isopropylmalate dehydratase small subunit from Thermococcus kodakarensis (strain ATCC BAA-918 / JCM 12380 / KOD1) (Pyrococcus kodakaraensis (strain KOD1)).